Here is a 1630-residue protein sequence, read N- to C-terminus: Separin (1630 aa).

The interval 1016-1037 is disordered; sequence SKHSTGLKLCDSPRSSSMTPRG. The region spanning 1443-1542 is the Peptidase C50 domain; the sequence is EDNISMILNP…SAAMKYYGKL (100 aa). Cys-1531 is a catalytic residue.

May bind calcium. Interacts with PDS1. Interacts with MCD1.

It localises to the nucleus. Its subcellular location is the cytoplasm. The protein localises to the cytoskeleton. It is found in the microtubule organizing center. The protein resides in the spindle pole body. The catalysed reaction is All bonds known to be hydrolyzed by this endopeptidase have arginine in P1 and an acidic residue in P4. P6 is often occupied by an acidic residue or by a hydroxy-amino-acid residue, the phosphorylation of which enhances cleavage.. With respect to regulation, it is inactivated via its interaction with PDS1, which probably covers its active site. PDS1 degradation at anaphase, liberates it and triggers MCD1 cleavage. Its function is as follows. Caspase-like protease, which plays a central role in the chromosome segregation by cleaving the MCD1/SCC1 subunit of the cohesin complex at the onset of anaphase. During most of the cell cycle, it is inactivated by securin/PDS1 protein. It also promotes anaphase spindle elongation. A component of the FEAR (CDC14 early anaphase release) network which promotes CDC14 release from the nucleolus during early anaphase. Cleaves SLK19. This chain is Separin (ESP1), found in Saccharomyces cerevisiae (strain ATCC 204508 / S288c) (Baker's yeast).